The primary structure comprises 108 residues: MNPFKMQQMLSQAKEMQEQMQEKLAATVVEASSGGGAVSVKMNGKKELLKLTIDPAAVLSLSGANPDVEMLEDLITAAINEAGRRAEEILKSSMQGLLGGLNLPPGLF.

This sequence belongs to the YbaB/EbfC family. Homodimer.

The protein localises to the cytoplasm. It localises to the nucleoid. In terms of biological role, binds to DNA and alters its conformation. May be involved in regulation of gene expression, nucleoid organization and DNA protection. The chain is Nucleoid-associated protein ACP_0492 from Acidobacterium capsulatum (strain ATCC 51196 / DSM 11244 / BCRC 80197 / JCM 7670 / NBRC 15755 / NCIMB 13165 / 161).